A 419-amino-acid polypeptide reads, in one-letter code: UDP-N-acetylglucosamine 1-carboxyvinyltransferase (419 aa).

22-23 is a binding site for phosphoenolpyruvate; that stretch reads KN. R95 lines the UDP-N-acetyl-alpha-D-glucosamine pocket. C119 acts as the Proton donor in catalysis. 2-(S-cysteinyl)pyruvic acid O-phosphothioketal is present on C119. Residues 164–167, D308, and I330 each bind UDP-N-acetyl-alpha-D-glucosamine; that span reads KVSV.

This sequence belongs to the EPSP synthase family. MurA subfamily.

The protein localises to the cytoplasm. The enzyme catalyses phosphoenolpyruvate + UDP-N-acetyl-alpha-D-glucosamine = UDP-N-acetyl-3-O-(1-carboxyvinyl)-alpha-D-glucosamine + phosphate. It participates in cell wall biogenesis; peptidoglycan biosynthesis. Cell wall formation. Adds enolpyruvyl to UDP-N-acetylglucosamine. This is UDP-N-acetylglucosamine 1-carboxyvinyltransferase from Rickettsia akari (strain Hartford).